Reading from the N-terminus, the 172-residue chain is 3-hydroxydecanoyl-[acyl-carrier-protein] dehydratase (172 aa).

His71 is a catalytic residue.

The protein belongs to the thioester dehydratase family. FabA subfamily. In terms of assembly, homodimer.

Its subcellular location is the cytoplasm. The enzyme catalyses a (3R)-hydroxyacyl-[ACP] = a (2E)-enoyl-[ACP] + H2O. The catalysed reaction is (3R)-hydroxydecanoyl-[ACP] = (2E)-decenoyl-[ACP] + H2O. It catalyses the reaction (2E)-decenoyl-[ACP] = (3Z)-decenoyl-[ACP]. The protein operates within lipid metabolism; fatty acid biosynthesis. Its function is as follows. Necessary for the introduction of cis unsaturation into fatty acids. Catalyzes the dehydration of (3R)-3-hydroxydecanoyl-ACP to E-(2)-decenoyl-ACP and then its isomerization to Z-(3)-decenoyl-ACP. Can catalyze the dehydratase reaction for beta-hydroxyacyl-ACPs with saturated chain lengths up to 16:0, being most active on intermediate chain length. In Salmonella choleraesuis (strain SC-B67), this protein is 3-hydroxydecanoyl-[acyl-carrier-protein] dehydratase.